We begin with the raw amino-acid sequence, 161 residues long: Low molecular weight phosphotyrosine protein phosphatase (161 aa).

Residue cysteine 14 is the Nucleophile of the active site. Arginine 20 functions as the Transition state stabilizer in the catalytic mechanism. Serine 57 is modified (phosphoserine). The Proton donor role is filled by aspartate 133.

The protein belongs to the low molecular weight phosphotyrosine protein phosphatase family.

It localises to the cytoplasm. The enzyme catalyses O-phospho-L-tyrosyl-[protein] + H2O = L-tyrosyl-[protein] + phosphate. It catalyses the reaction a phosphate monoester + H2O = an alcohol + phosphate. Functionally, acts on tyrosine phosphorylated proteins, low-MW aryl phosphates and natural and synthetic acyl phosphates. This Saccharomyces cerevisiae (strain ATCC 204508 / S288c) (Baker's yeast) protein is Low molecular weight phosphotyrosine protein phosphatase.